A 1358-amino-acid polypeptide reads, in one-letter code: Phosphoinositide 3-kinase regulatory subunit 4 (1358 aa).

Gly2 carries the N-myristoyl glycine lipid modification. The region spanning 26 to 324 is the Protein kinase domain; it reads FEYDKSLGST…AFPEVFYTFL (299 aa). Residues 32-40 and Lys53 each bind ATP; that span reads LGSTRFFKV. The Proton acceptor role is filled by Asp148. 4 HEAT repeats span residues 413–450, 458–495, 572–610, and 612–648; these read ILLD…LVQE, IYPE…TALR, KAND…YVGW, and SSSI…LGLL. Ser808, Ser813, Ser853, and Ser865 each carry phosphoserine. The segment at 875-899 is disordered; sequence LPKTSDHEVVPTGKSPRSESSAGVC. WD repeat units lie at residues 991-1030, 1040-1079, 1093-1134, 1139-1178, 1182-1223, and 1237-1278; these read EHKS…GKTT, RIGG…LPKS, KEDG…NAWT, LKSG…PISS, PSRA…RRLT, and PSPH…RSYV. Residues 1307-1326 are disordered; that stretch reads KQKVGPSDDTPRRGPESLPV. A compositionally biased stretch (basic and acidic residues) spans 1315–1326; sequence DTPRRGPESLPV. Phosphothreonine is present on Thr1316. The stretch at 1327 to 1358 is one WD 7 repeat; the sequence is GHHDIITDIATFQTTQGFIVTASRDGIVKVWK.

The protein belongs to the protein kinase superfamily. Ser/Thr protein kinase family. As to quaternary structure, component of the PI3K (PI3KC3/PI3K-III/class III phosphatidylinositol 3-kinase) complex the core of which is composed of the catalytic subunit PIK3C3, the regulatory subunit PIK3R4 and BECN1 associating with additional regulatory/auxiliary subunits to form alternative complex forms. Alternative complex forms containing a fourth regulatory subunit in a mutually exclusive manner are PI3K complex I (PI3KC3-C1) containing ATG14, and PI3K complex II (PI3KC3-C2) containing UVRAG. PI3KC3-C1 displays a V-shaped architecture with PIK3R4 serving as a bridge between PIK3C3 and the ATG14:BECN1 subcomplex. Both, PI3KC3-C1 and PI3KC3-C2, can associate with further regulatory subunits, such as RUBCN, SH3GLB1/Bif-1, AMBRA1 and NRBF2. PI3KC3-C1 probably associates with PIK3CB. Interacts with RAB7A in the presence of PIK3C3/VPS34. Interacts with NRBF2. Interacts with ARMC3. Requires Mn(2+) as cofactor. In terms of processing, myristoylated. Post-translationally, probably autophosphorylated.

It is found in the late endosome. The protein resides in the cytoplasmic vesicle. It localises to the autophagosome. The protein localises to the membrane. The enzyme catalyses L-seryl-[protein] + ATP = O-phospho-L-seryl-[protein] + ADP + H(+). It catalyses the reaction L-threonyl-[protein] + ATP = O-phospho-L-threonyl-[protein] + ADP + H(+). Its function is as follows. Regulatory subunit of the PI3K complex that mediates formation of phosphatidylinositol 3-phosphate; different complex forms are believed to play a role in multiple membrane trafficking pathways: PI3KC3-C1 is involved in initiation of autophagosomes and PI3KC3-C2 in maturation of autophagosomes and endocytosis. Involved in regulation of degradative endocytic trafficking and cytokinesis, probably in the context of PI3KC3-C2. This Rattus norvegicus (Rat) protein is Phosphoinositide 3-kinase regulatory subunit 4 (Pik3r4).